The following is a 426-amino-acid chain: MLDLKRIRNNSNEIKEALNNRGEKFDVTVIDEVLKLDEERRNILVKVEVLKSKRNKVSSEVPKLKKEGKDVSNIVAEMKNLSEEIKGFDVTLAKIDEKIQYIMLRIPNIPNPQVPDGETDEDNIEIRNWLEPTKFDFEPKAHWDIGTNLNILDFERAGKVTGSRFTFYKGLGARLERAVISYFLDTHTEKHDYTEILPPYMVNRTSMIGTGQLPKFEEDAFKISEDDYFLIPTAEVPVTNLYRDEILKGDELPLKHVAYSACFRSEAGSAGRDTRGLVRQHQFNKVELVKFTKPEQSYEELEKLTNDAETVLKELGIPYRVVRICKGDLGFTAALKYDLEVWMPSYNRYVEISSCSNFEDFQARRANIRYKEDAKAKPQYVHTLNGSGVAIGRTVAAILENYQSEDGSVTIPEVLRPYMGGREVIK.

233–235 (TAE) is an L-serine binding site. 264-266 (RSE) is an ATP binding site. Glutamate 287 contributes to the L-serine binding site. 351 to 354 (EISS) contributes to the ATP binding site. Serine 387 lines the L-serine pocket.

It belongs to the class-II aminoacyl-tRNA synthetase family. Type-1 seryl-tRNA synthetase subfamily. Homodimer. The tRNA molecule binds across the dimer.

The protein resides in the cytoplasm. The catalysed reaction is tRNA(Ser) + L-serine + ATP = L-seryl-tRNA(Ser) + AMP + diphosphate + H(+). It carries out the reaction tRNA(Sec) + L-serine + ATP = L-seryl-tRNA(Sec) + AMP + diphosphate + H(+). Its pathway is aminoacyl-tRNA biosynthesis; selenocysteinyl-tRNA(Sec) biosynthesis; L-seryl-tRNA(Sec) from L-serine and tRNA(Sec): step 1/1. Its function is as follows. Catalyzes the attachment of serine to tRNA(Ser). Is also able to aminoacylate tRNA(Sec) with serine, to form the misacylated tRNA L-seryl-tRNA(Sec), which will be further converted into selenocysteinyl-tRNA(Sec). This is Serine--tRNA ligase from Clostridium botulinum (strain Kyoto / Type A2).